A 316-amino-acid chain; its full sequence is Ribosomal RNA large subunit methyltransferase F (316 aa).

Belongs to the methyltransferase superfamily. METTL16/RlmF family.

It is found in the cytoplasm. The enzyme catalyses adenosine(1618) in 23S rRNA + S-adenosyl-L-methionine = N(6)-methyladenosine(1618) in 23S rRNA + S-adenosyl-L-homocysteine + H(+). Its function is as follows. Specifically methylates the adenine in position 1618 of 23S rRNA. This is Ribosomal RNA large subunit methyltransferase F from Pseudomonas putida (strain W619).